A 190-amino-acid polypeptide reads, in one-letter code: Ribose 1,5-bisphosphate phosphokinase PhnN (190 aa).

ATP is bound at residue 10–17 (GPSGSGKD).

Belongs to the ribose 1,5-bisphosphokinase family.

It carries out the reaction alpha-D-ribose 1,5-bisphosphate + ATP = 5-phospho-alpha-D-ribose 1-diphosphate + ADP. The protein operates within metabolic intermediate biosynthesis; 5-phospho-alpha-D-ribose 1-diphosphate biosynthesis; 5-phospho-alpha-D-ribose 1-diphosphate from D-ribose 5-phosphate (route II): step 3/3. Its function is as follows. Catalyzes the phosphorylation of ribose 1,5-bisphosphate to 5-phospho-D-ribosyl alpha-1-diphosphate (PRPP). This Pseudomonas fluorescens (strain SBW25) protein is Ribose 1,5-bisphosphate phosphokinase PhnN.